Reading from the N-terminus, the 71-residue chain is Large ribosomal subunit protein bL31 (71 aa).

Residues cysteine 16, cysteine 18, cysteine 37, and cysteine 40 each contribute to the Zn(2+) site.

It belongs to the bacterial ribosomal protein bL31 family. Type A subfamily. Part of the 50S ribosomal subunit. The cofactor is Zn(2+).

Binds the 23S rRNA. The protein is Large ribosomal subunit protein bL31 of Yersinia pseudotuberculosis serotype O:1b (strain IP 31758).